We begin with the raw amino-acid sequence, 337 residues long: ATP-dependent 6-phosphofructokinase (337 aa).

Glycine 11 provides a ligand contact to ATP. ADP is bound at residue 21-25 (RAVVR). Residues 72-73 (RY) and 102-105 (GDGS) each bind ATP. Mg(2+) is bound at residue aspartate 103. Substrate is bound at residue 125-127 (TID). Catalysis depends on aspartate 127, which acts as the Proton acceptor. Arginine 154 is an ADP binding site. Substrate is bound by residues arginine 162 and 169-171 (MGR). ADP contacts are provided by residues 185 to 187 (GAD), arginine 212, and 214 to 216 (KNH). Substrate-binding positions include glutamate 223, arginine 245, and 251-254 (HILR).

This sequence belongs to the phosphofructokinase type A (PFKA) family. ATP-dependent PFK group I subfamily. Prokaryotic clade 'B1' sub-subfamily. In terms of assembly, homotetramer. Mg(2+) serves as cofactor.

Its subcellular location is the cytoplasm. It catalyses the reaction beta-D-fructose 6-phosphate + ATP = beta-D-fructose 1,6-bisphosphate + ADP + H(+). The protein operates within carbohydrate degradation; glycolysis; D-glyceraldehyde 3-phosphate and glycerone phosphate from D-glucose: step 3/4. With respect to regulation, allosterically activated by ADP and other diphosphonucleosides, and allosterically inhibited by phosphoenolpyruvate. In terms of biological role, catalyzes the phosphorylation of D-fructose 6-phosphate to fructose 1,6-bisphosphate by ATP, the first committing step of glycolysis. The sequence is that of ATP-dependent 6-phosphofructokinase from Streptococcus equi subsp. zooepidemicus (strain H70).